The chain runs to 112 residues: Putative pterin-4-alpha-carbinolamine dehydratase (112 aa).

The protein belongs to the pterin-4-alpha-carbinolamine dehydratase family.

The catalysed reaction is (4aS,6R)-4a-hydroxy-L-erythro-5,6,7,8-tetrahydrobiopterin = (6R)-L-erythro-6,7-dihydrobiopterin + H2O. This chain is Putative pterin-4-alpha-carbinolamine dehydratase, found in Shewanella piezotolerans (strain WP3 / JCM 13877).